Reading from the N-terminus, the 188-residue chain is UPF0301 protein XOO1309 (188 aa).

It belongs to the UPF0301 (AlgH) family.

The sequence is that of UPF0301 protein XOO1309 from Xanthomonas oryzae pv. oryzae (strain MAFF 311018).